We begin with the raw amino-acid sequence, 569 residues long: Spermatogenesis-associated protein 16 (569 aa).

It belongs to the SPATA16 family.

The protein resides in the golgi apparatus. It localises to the cytoplasmic vesicle. Its subcellular location is the secretory vesicle. It is found in the acrosome. In terms of biological role, essential for spermiogenesis and male fertility. Involved in the formation of sperm acrosome during spermatogenesis. The sequence is that of Spermatogenesis-associated protein 16 (SPATA16) from Macaca fascicularis (Crab-eating macaque).